The sequence spans 97 residues: uncharacterized protein (97 aa).

Residues 38–97 (TSPPDWNKFSGKVSINEPTTSKSKSKSTSTSTSTSTSTSTSTSTSSSTSSTSSTTSSINK) are disordered. A compositionally biased stretch (low complexity) spans 56 to 97 (TTSKSKSKSTSTSTSTSTSTSTSTSTSSSTSSTSSTTSSINK).

This is an uncharacterized protein from Dictyostelium discoideum (Social amoeba).